Here is a 51-residue protein sequence, read N- to C-terminus: Insulin-1 (51 aa).

Intrachain disulfides connect cysteine 8–cysteine 37, cysteine 20–cysteine 50, and cysteine 36–cysteine 41.

The protein belongs to the insulin family. Heterodimer of a B chain and an A chain linked by two disulfide bonds.

The protein resides in the secreted. Insulin decreases blood glucose concentration. It increases cell permeability to monosaccharides, amino acids and fatty acids. It accelerates glycolysis, the pentose phosphate cycle, and glycogen synthesis in liver. This chain is Insulin-1 (ins1), found in Batrachoididae sp. (Toadfish).